Here is a 195-residue protein sequence, read N- to C-terminus: MRHADVTRDTLETRISVRIDLDGTGKSVLATGVPFFDHMLDQIARHGAIDLEVRAEGDTHIDDHHTVEDVGITLGQAFAKALGDKKGILRYGHAYVPLDEALSRVVVDFSGRPGLHYFVDYTRARIGNFDVDLAREFFQGFVNHAGVTLHVDNLRGDNAHHQCETIFKAFGRALRMAATRDERLAGAIPSTKGAL.

It belongs to the imidazoleglycerol-phosphate dehydratase family.

It localises to the cytoplasm. The enzyme catalyses D-erythro-1-(imidazol-4-yl)glycerol 3-phosphate = 3-(imidazol-4-yl)-2-oxopropyl phosphate + H2O. It functions in the pathway amino-acid biosynthesis; L-histidine biosynthesis; L-histidine from 5-phospho-alpha-D-ribose 1-diphosphate: step 6/9. This Azoarcus sp. (strain BH72) protein is Imidazoleglycerol-phosphate dehydratase.